Reading from the N-terminus, the 519-residue chain is O-fucosyltransferase 31 (519 aa).

Residues 18–38 (ALAGVFVLLFPILYPNLFSPL) traverse the membrane as a helical; Signal-anchor for type II membrane protein segment. N131 is a glycosylation site (N-linked (GlcNAc...) asparagine). 302–304 (HLR) serves as a coordination point for substrate. N-linked (GlcNAc...) asparagine glycans are attached at residues N373 and N474.

Belongs to the glycosyltransferase GT106 family.

It is found in the membrane. It participates in glycan metabolism. The chain is O-fucosyltransferase 31 from Arabidopsis thaliana (Mouse-ear cress).